Here is a 440-residue protein sequence, read N- to C-terminus: Fibulin-7 (440 aa).

The signal sequence occupies residues 1 to 24 (MGPGSQRALFLLLLLLASPGARAF). A coiled-coil region spans residues 28–73 (LNKQQLLTTIRQLQQLLKGQETRFTEGIRNMKSRLAALQNTVNKMT). A Sushi domain is found at 79 to 136 (VSCPALEAPPDGKKFGSKYLVDHEVYFTCNPGFQLVGPSSVVCLANGSWTGEQPRCRD). Cystine bridges form between Cys81/Cys121, Cys107/Cys134, Cys140/Cys151, Cys145/Cys160, Cys162/Cys171, Cys229/Cys245, Cys241/Cys254, Cys256/Cys269, Cys275/Cys288, Cys282/Cys297, and Cys302/Cys319. N-linked (GlcNAc...) asparagine glycosylation occurs at Asn124. The 37-residue stretch at 136–172 (DISECSSQPCHNGGTCVEGINHYRCICPPGKTGNRCQ) folds into the EGF-like 1; calcium-binding domain. The 46-residue stretch at 225 to 270 (DVNECEIYGQKGRPRLCMHACVNTPGSYRCTCPSGYRILADGKSCE) folds into the EGF-like 2; calcium-binding domain. The region spanning 271–320 (DVDECAGPQHMCPRGTTCINTGGGFQCVNPECPEGSGNISYVKTSPFQCE) is the EGF-like 3; calcium-binding domain. A glycan (N-linked (GlcNAc...) asparagine) is linked at Asn308.

The protein belongs to the fibulin family. In terms of assembly, interacts with heparin, FBLN1, FN1 and DSPP. Preferentially binds dental mesenchyme cells and odontoblasts but not dental epithelial cells or nondental cells. Binding requires a heparan sulfate-containing receptor on the cell surface as well as an integrin. Post-translationally, N-glycosylated. As to expression, highly expressed in newborn incisors and molars. A weaker expression is seen in the brain, kidneys, muscles and bones.

Its subcellular location is the secreted. The protein resides in the extracellular space. It is found in the extracellular matrix. Its function is as follows. An adhesion molecule that interacts with extracellular matrix molecules in developing teeth and may play important roles in differentiation and maintenance of odontoblasts as well as in dentin formation. This Mus musculus (Mouse) protein is Fibulin-7 (Fbln7).